The chain runs to 60 residues: Large ribosomal subunit protein uL30 (60 aa).

This sequence belongs to the universal ribosomal protein uL30 family. In terms of assembly, part of the 50S ribosomal subunit.

In Streptomyces coelicolor (strain ATCC BAA-471 / A3(2) / M145), this protein is Large ribosomal subunit protein uL30.